Reading from the N-terminus, the 269-residue chain is 5'-nucleotidase SurE (269 aa).

A divalent metal cation is bound by residues D11, D12, S43, and N101.

The protein belongs to the SurE nucleotidase family. The cofactor is a divalent metal cation.

The protein localises to the cytoplasm. It carries out the reaction a ribonucleoside 5'-phosphate + H2O = a ribonucleoside + phosphate. In terms of biological role, nucleotidase that shows phosphatase activity on nucleoside 5'-monophosphates. The protein is 5'-nucleotidase SurE of Prochlorococcus marinus (strain AS9601).